We begin with the raw amino-acid sequence, 275 residues long: Diaminopimelate epimerase (275 aa).

Positions 13, 46, and 66 each coordinate substrate. The active-site Proton donor is C75. Substrate-binding positions include G76–N77, N159, N192, and E210–R211. Residue C219 is the Proton acceptor of the active site. G220–T221 contacts substrate.

Belongs to the diaminopimelate epimerase family. In terms of assembly, homodimer.

It is found in the cytoplasm. It catalyses the reaction (2S,6S)-2,6-diaminopimelate = meso-2,6-diaminopimelate. It functions in the pathway amino-acid biosynthesis; L-lysine biosynthesis via DAP pathway; DL-2,6-diaminopimelate from LL-2,6-diaminopimelate: step 1/1. In terms of biological role, catalyzes the stereoinversion of LL-2,6-diaminopimelate (L,L-DAP) to meso-diaminopimelate (meso-DAP), a precursor of L-lysine and an essential component of the bacterial peptidoglycan. The chain is Diaminopimelate epimerase from Psychromonas ingrahamii (strain DSM 17664 / CCUG 51855 / 37).